Consider the following 297-residue polypeptide: Homoserine kinase (297 aa).

82-92 (PLTRGLGSSAS) contacts ATP.

It belongs to the GHMP kinase family. Homoserine kinase subfamily.

It is found in the cytoplasm. It carries out the reaction L-homoserine + ATP = O-phospho-L-homoserine + ADP + H(+). It participates in amino-acid biosynthesis; L-threonine biosynthesis; L-threonine from L-aspartate: step 4/5. Catalyzes the ATP-dependent phosphorylation of L-homoserine to L-homoserine phosphate. This Bacillus thuringiensis subsp. konkukian (strain 97-27) protein is Homoserine kinase.